Consider the following 103-residue polypeptide: Large ribosomal subunit protein eL30 (103 aa).

It belongs to the eukaryotic ribosomal protein eL30 family.

This is Large ribosomal subunit protein eL30 from Methanosarcina mazei (strain ATCC BAA-159 / DSM 3647 / Goe1 / Go1 / JCM 11833 / OCM 88) (Methanosarcina frisia).